A 140-amino-acid polypeptide reads, in one-letter code: Con-Ins Im2 (140 aa).

Residues 1–29 form the signal peptide; the sequence is MALTWPSSPPVLLTLLLSLLALQLCAVYG. 4 cysteine pairs are disulfide-bonded: Cys-35/Cys-123, Cys-50/Cys-126, Cys-62/Cys-139, and Cys-125/Cys-130. Residues 64–110 constitute a propeptide, c peptide; that stretch reads PRGYVSNWFTKRSAPNKPAETFVDQNLRGVLLNKREALSYLRPREPR. Glu-134 bears the 4-carboxyglutamate; partial mark.

Belongs to the insulin family. Heterodimer of A and B chains; disulfide-linked. In terms of tissue distribution, expressed by the venom gland.

The protein resides in the secreted. This venom insulin facilitates prey capture by rapidly inducing hypoglycemic shock. Intraperitoneal injection of this peptide into zebrafish lowers blood glucose with the same potency than human insulin. In vivo, when applied to water, this peptide reduces overall locomotor activity of zebrafish larvae, observed as a significant decrease in the percentage of time spent swimming and movement frequency. The polypeptide is Con-Ins Im2 (Conus imperialis (Imperial cone)).